Here is a 323-residue protein sequence, read N- to C-terminus: Aldo-keto reductase family 1 member C1 (323 aa).

NADP(+) contacts are provided by residues 20-24 and Asp-50; that span reads GFGTY. Tyr-24 contributes to the substrate binding site. The Proton donor role is filled by Tyr-55. His-117 serves as a coordination point for substrate. NADP(+)-binding positions include 166–167, Gln-190, and 216–222; these read SN and YSALGSH. Substrate-binding residues include His-222 and Trp-227. 270–280 contributes to the NADP(+) binding site; that stretch reads KSYNEQRIREN.

It belongs to the aldo/keto reductase family. As to quaternary structure, monomer. Expressed in liver, adrenal gland, intestine and kidney.

Its subcellular location is the cytoplasm. It localises to the cytosol. The enzyme catalyses a 3alpha-hydroxysteroid + NADP(+) = a 3-oxosteroid + NADPH + H(+). The catalysed reaction is a 3alpha-hydroxysteroid + NAD(+) = a 3-oxosteroid + NADH + H(+). It catalyses the reaction (17R,20S)-17,20-dihydroxypregn-4-en-3-one + NADP(+) = 17alpha-hydroxyprogesterone + NADPH + H(+). It carries out the reaction (17R,20S)-17,20-dihydroxypregn-4-en-3-one + NAD(+) = 17alpha-hydroxyprogesterone + NADH + H(+). The enzyme catalyses (20S)-hydroxypregn-4-en-3-one + NADP(+) = progesterone + NADPH + H(+). The catalysed reaction is (20S)-hydroxypregn-4-en-3-one + NAD(+) = progesterone + NADH + H(+). It catalyses the reaction (1R,2R)-1,2-dihydrobenzene-1,2-diol + NADP(+) = catechol + NADPH + H(+). It carries out the reaction (S)-indan-1-ol + NAD(+) = indan-1-one + NADH + H(+). The enzyme catalyses (S)-indan-1-ol + NADP(+) = indan-1-one + NADPH + H(+). The catalysed reaction is 5alpha-androstane-3alpha,17beta-diol + NADP(+) = 17beta-hydroxy-5alpha-androstan-3-one + NADPH + H(+). It catalyses the reaction 5alpha-androstane-3beta,17beta-diol + NADP(+) = 17beta-hydroxy-5alpha-androstan-3-one + NADPH + H(+). It carries out the reaction 5alpha-androstane-3alpha,17beta-diol + NAD(+) = 17beta-hydroxy-5alpha-androstan-3-one + NADH + H(+). The enzyme catalyses 17beta-hydroxy-5alpha-androstan-3-one + NADP(+) = 5alpha-androstan-3,17-dione + NADPH + H(+). The catalysed reaction is androsterone + NADP(+) = 5alpha-androstan-3,17-dione + NADPH + H(+). It catalyses the reaction androsterone + NADPH + H(+) = 5alpha-androstane-3alpha,17beta-diol + NADP(+). It carries out the reaction 5alpha-androstane-3alpha,17beta-diol + NAD(+) = androsterone + NADH + H(+). The enzyme catalyses 17beta-estradiol + NADP(+) = estrone + NADPH + H(+). The catalysed reaction is 17beta-estradiol + NAD(+) = estrone + NADH + H(+). It catalyses the reaction testosterone + NADP(+) = androst-4-ene-3,17-dione + NADPH + H(+). It carries out the reaction 20alpha-hydroxy-5beta-pregnan-3-one + NADP(+) = 5beta-pregnan-3,20-dione + NADPH + H(+). The enzyme catalyses 3beta-hydroxy-5beta-pregnane-20-one + NADP(+) = 5beta-pregnan-3,20-dione + NADPH + H(+). The catalysed reaction is 3beta-hydroxy-5beta-pregnane-20-one + NADPH + H(+) = 3beta,20alpha-dihydroxy-5beta-pregnane + NADP(+). It catalyses the reaction (3beta,5alpha,17beta)-3-hydroxyandrostan-17-yl sulfate + NADP(+) = 5alpha-dihydrotestosterone sulfate + NADPH + H(+). It participates in steroid metabolism. Cytosolic aldo-keto reductase that catalyzes the NADH and NADPH-dependent reduction of ketosteroids to hydroxysteroids. Most probably acts as a reductase in vivo since the oxidase activity measured in vitro is inhibited by physiological concentrations of NADPH. Displays a broad positional specificity acting on positions 3, 17 and 20 of steroids and regulates the metabolism of hormones like estrogens and androgens. May also reduce conjugated steroids such as 5alpha-dihydrotestosterone sulfate. Displays affinity for bile acids. This chain is Aldo-keto reductase family 1 member C1 (AKR1C1), found in Macaca fuscata fuscata (Japanese macaque).